The following is a 462-amino-acid chain: L-seryl-tRNA(Sec) selenium transferase (462 aa).

N6-(pyridoxal phosphate)lysine is present on K292.

It belongs to the SelA family. Pyridoxal 5'-phosphate serves as cofactor.

It is found in the cytoplasm. The enzyme catalyses L-seryl-tRNA(Sec) + selenophosphate + H(+) = L-selenocysteinyl-tRNA(Sec) + phosphate. It functions in the pathway aminoacyl-tRNA biosynthesis; selenocysteinyl-tRNA(Sec) biosynthesis; selenocysteinyl-tRNA(Sec) from L-seryl-tRNA(Sec) (bacterial route): step 1/1. In terms of biological role, converts seryl-tRNA(Sec) to selenocysteinyl-tRNA(Sec) required for selenoprotein biosynthesis. The chain is L-seryl-tRNA(Sec) selenium transferase from Clostridium perfringens (strain ATCC 13124 / DSM 756 / JCM 1290 / NCIMB 6125 / NCTC 8237 / Type A).